The sequence spans 468 residues: Phosphoglucosamine mutase (468 aa).

S112 functions as the Phosphoserine intermediate in the catalytic mechanism. Residues S112, D254, D256, and D258 each contribute to the Mg(2+) site. Phosphoserine is present on S112.

The protein belongs to the phosphohexose mutase family. Mg(2+) is required as a cofactor. Post-translationally, activated by phosphorylation.

It carries out the reaction alpha-D-glucosamine 1-phosphate = D-glucosamine 6-phosphate. Its function is as follows. Catalyzes the conversion of glucosamine-6-phosphate to glucosamine-1-phosphate. This Prochlorococcus marinus (strain MIT 9303) protein is Phosphoglucosamine mutase.